Here is a 668-residue protein sequence, read N- to C-terminus: Bestrophin-3 (668 aa).

The Cytoplasmic segment spans residues 1-31; sequence MTVTYSSKVANATFFGFHRLLLKWRGSIYKL. A Ca(2+)-binding site is contributed by Ala10. Residues 32–51 traverse the membrane as a helical segment; it reads LYREFIVFAVLYTAISLVYR. The Extracellular portion of the chain corresponds to 52–60; that stretch reads LLLTGVQKR. The chain crosses the membrane as a helical span at residues 61-82; sequence YFEKLSIYCDRYAEQIPVTFVL. The Cytoplasmic segment spans residues 83-237; sequence GFYVTLVVNR…DWVGIPLVYT (155 aa). The chain crosses the membrane as a helical span at residues 238-255; it reads QVVTLAVYTFFFACLIGR. Residues 256–274 lie on the Extracellular side of the membrane; sequence QFLDPTKGYAGHDLDLYIP. A helical transmembrane segment spans residues 275 to 288; sequence IFTLLQFFFYAGWL. The Cytoplasmic portion of the chain corresponds to 289 to 668; the sequence is KVAEQLINPF…LNKETEESPK (380 aa). Ca(2+)-binding residues include Gln293, Asn296, Asp301, and Asp304. 3 disordered regions span residues 400–454, 473–493, and 532–570; these read SAHE…KKSC, RETS…VRTS, and TGVQ…VSAS. Residues 425 to 436 show a composition bias toward basic and acidic residues; the sequence is PRDDLSPARDLL. A compositionally biased stretch (low complexity) spans 475–489; the sequence is TSQTSTLQSLTPQSS. The span at 532 to 545 shows a compositional bias: polar residues; that stretch reads TGVQPSKTEQQQGP.

This sequence belongs to the anion channel-forming bestrophin (TC 1.A.46) family. Calcium-sensitive chloride channel subfamily. As to expression, present in skeletal muscle and weakly in brain, spinal cord, bone marrow and retina.

It localises to the cell membrane. It carries out the reaction chloride(in) = chloride(out). Its function is as follows. Ligand-gated anion channel that allows the movement of chloride monoatomic anions across cell membranes when activated by calcium (Ca2+). The polypeptide is Bestrophin-3 (Homo sapiens (Human)).